Consider the following 360-residue polypeptide: Aminomethyltransferase (360 aa).

Belongs to the GcvT family. The glycine cleavage system is composed of four proteins: P, T, L and H.

It carries out the reaction N(6)-[(R)-S(8)-aminomethyldihydrolipoyl]-L-lysyl-[protein] + (6S)-5,6,7,8-tetrahydrofolate = N(6)-[(R)-dihydrolipoyl]-L-lysyl-[protein] + (6R)-5,10-methylene-5,6,7,8-tetrahydrofolate + NH4(+). Functionally, the glycine cleavage system catalyzes the degradation of glycine. In Pseudomonas putida (strain ATCC 47054 / DSM 6125 / CFBP 8728 / NCIMB 11950 / KT2440), this protein is Aminomethyltransferase.